A 265-amino-acid chain; its full sequence is Small ribosomal subunit protein uS2 (265 aa).

The segment at 226-265 is disordered; it reads AAAPNSASVREEEFSADAADEGKGRRAPAKKGDKKADAAE. The span at 245-265 shows a compositional bias: basic and acidic residues; the sequence is DEGKGRRAPAKKGDKKADAAE.

It belongs to the universal ribosomal protein uS2 family.

This Xanthomonas axonopodis pv. citri (strain 306) protein is Small ribosomal subunit protein uS2.